The chain runs to 90 residues: UPF0235 protein CPn_0497/CP_0257/CPj0497/CpB0517 (90 aa).

Belongs to the UPF0235 family.

The sequence is that of UPF0235 protein CPn_0497/CP_0257/CPj0497/CpB0517 from Chlamydia pneumoniae (Chlamydophila pneumoniae).